The sequence spans 146 residues: Small ribosomal subunit protein uS5 (146 aa).

The 64-residue stretch at 8-71 (FSEVVVNIGR…DDAFKNIIKV (64 aa)) folds into the S5 DRBM domain.

It belongs to the universal ribosomal protein uS5 family. Part of the 30S ribosomal subunit. Contacts proteins S4 and S8.

In terms of biological role, with S4 and S12 plays an important role in translational accuracy. Located at the back of the 30S subunit body where it stabilizes the conformation of the head with respect to the body. This is Small ribosomal subunit protein uS5 from Helicobacter hepaticus (strain ATCC 51449 / 3B1).